Reading from the N-terminus, the 305-residue chain is Flagellin FlaB2 (305 aa).

The propeptide at 1–18 is propeptide; sequence MGLQKIVKKYNKKMKRKG.

It belongs to the archaeal flagellin family. Post-translationally, glycosylated.

Its subcellular location is the archaeal flagellum. Flagellin is the subunit protein which polymerizes to form the filaments of archaeal flagella. The chain is Flagellin FlaB2 from Saccharolobus shibatae (strain ATCC 51178 / DSM 5389 / JCM 8931 / NBRC 15437 / B12) (Sulfolobus shibatae).